Reading from the N-terminus, the 389-residue chain is MVTVEEVRKAQRAEGPATVLAIGTATPPNCLDQSTYPDYYFRITNSEHKTELKEKFQRMCDKSMIKKRYMYLTEEILKEHPNMCAYMAPSLDARQDMVVVEIPKLGKEAAVKAIKEWGQPKSKITHLVFCTTSGVDMPGADYQLTKLLGLRPSVKRLMMYQQGCFAGGTVLRLAKDLAENNRGARVLVVCSEITAVTFRGPSDTHLDSLVGQALFGDGAAAIIVGADPLPEVEKPLFEVVSTAQTILPDSDGAIDGHLREVGVTFHLLKDVPGLISKNIEKSLVEAFQPLGISDWNSLFWIAHPGGPAILDQVEEKLALKPEKLGATRHVLSEYGNMSSACVLFILDEMRRKSAEKGLKTTGEGLDWGVLFGFGPGLTVETVVLHSLTT.

Cysteine 164 is an active-site residue.

Belongs to the thiolase-like superfamily. Chalcone/stilbene synthases family.

The enzyme catalyses (E)-4-coumaroyl-CoA + 3 malonyl-CoA + 3 H(+) = 2',4,4',6'-tetrahydroxychalcone + 3 CO2 + 4 CoA. Its pathway is secondary metabolite biosynthesis; flavonoid biosynthesis. Functionally, the primary product of this enzyme is 4,2',4',6'-tetrahydroxychalcone (also termed naringenin-chalcone or chalcone) which can under specific conditions spontaneously isomerize into naringenin. The protein is Chalcone synthase (CHS1) of Casuarina glauca (Swamp oak).